The primary structure comprises 454 residues: Response regulator PleD (454 aa).

2 consecutive Response regulatory domains span residues 4 to 120 (RILV…RSLT) and 155 to 269 (RVLI…KTQI). Mg(2+) is bound by residues Asp-9, Asp-10, Asp-53, and Met-55. 4-aspartylphosphate is present on Asp-53. The region spanning 319–454 (DPVSALLIDI…GRNAVVGKAA (136 aa)) is the GGDEF domain. Residues Asn-335 and Asp-344 each coordinate substrate. The active-site Proton acceptor is Glu-370.

In terms of assembly, homodimer. Inactive monomer in solution. In terms of processing, phosphorylated by PleC and DivJ. Phosphorylation stimulates cyclase activity.

It localises to the cytoplasm. It catalyses the reaction 2 GTP = 3',3'-c-di-GMP + 2 diphosphate. Its pathway is purine metabolism; 3',5'-cyclic di-GMP biosynthesis. Its activity is regulated as follows. Allosterically inhibited by the product c-di-GMP. Functionally, response regulator that is part of a signal transduction pathway controlling cell differentiation in the swarmer-to-stalked cell transition. In terms of biological role, catalyzes the condensation of two GTP molecules to the cyclic dinucleotide di-GMP (c-di-GMP), which acts as a secondary messenger. The sequence is that of Response regulator PleD (pleD) from Caulobacter vibrioides (strain ATCC 19089 / CIP 103742 / CB 15) (Caulobacter crescentus).